A 359-amino-acid polypeptide reads, in one-letter code: Cytohesin-interacting protein (359 aa).

The region spanning 77–166 is the PDZ domain; it reads LVTVEKQDNE…LLTIETLNGT (90 aa). Residues 166 to 188 form an interaction with CYTH1 region; the sequence is TMILKRTELEAKLQVLKQTLKQK. Residues 166 to 188 are a coiled coil; it reads TMILKRTELEAKLQVLKQTLKQK.

In terms of assembly, interacts with CYTH1 and SNX27. Expressed in lymph nodes, thymus, spleen, lung, peripheral blood leukocytes and bone marrow.

The protein localises to the cytoplasm. It localises to the early endosome. In terms of biological role, by its binding to cytohesin-1 (CYTH1), it modifies activation of ARFs by CYTH1 and its precise function may be to sequester CYTH1 in the cytoplasm. This chain is Cytohesin-interacting protein (CYTIP), found in Homo sapiens (Human).